A 186-amino-acid chain; its full sequence is Elongation factor P (186 aa).

This sequence belongs to the elongation factor P family.

It localises to the cytoplasm. It participates in protein biosynthesis; polypeptide chain elongation. Functionally, involved in peptide bond synthesis. Stimulates efficient translation and peptide-bond synthesis on native or reconstituted 70S ribosomes in vitro. Probably functions indirectly by altering the affinity of the ribosome for aminoacyl-tRNA, thus increasing their reactivity as acceptors for peptidyl transferase. This chain is Elongation factor P, found in Synechococcus sp. (strain CC9902).